A 161-amino-acid chain; its full sequence is Pathogenesis-related protein 1 (161 aa).

An N-terminal signal peptide occupies residues M1–A26. Residues V34–Y149 form the SCP domain. Cystine bridges form between C70/C138, C113/C117, and C133/C147.

Belongs to the CRISP family. As to expression, expressed in flowers, stems and roots but not in leaves.

Its function is as follows. Probably involved in the defense reaction of plants against pathogens. The chain is Pathogenesis-related protein 1 from Arabidopsis thaliana (Mouse-ear cress).